The sequence spans 327 residues: Cytochrome P450 2C42 (327 aa).

Cys272 provides a ligand contact to heme.

This sequence belongs to the cytochrome P450 family. Heme is required as a cofactor.

It is found in the endoplasmic reticulum membrane. Its subcellular location is the microsome membrane. It carries out the reaction an organic molecule + reduced [NADPH--hemoprotein reductase] + O2 = an alcohol + oxidized [NADPH--hemoprotein reductase] + H2O + H(+). In terms of biological role, cytochromes P450 are a group of heme-thiolate monooxygenases. In liver microsomes, this enzyme is involved in an NADPH-dependent electron transport pathway. It oxidizes a variety of structurally unrelated compounds, including steroids, fatty acids, and xenobiotics. The chain is Cytochrome P450 2C42 (CYP2C42) from Sus scrofa (Pig).